The chain runs to 637 residues: MSQQETHGFQTEVKQLLHLMIHSLYSNKEIFLRELVSNAADAADKLRYLALTNDALYEGDGELRVRISADKDKGTVTIEDNGVGMTRDGVIEHLGTIAKSGTAEFFKNLSGEASKDSQLIGQFGVGFYSAFIVAKKVTVRTRAAGHKADEAVLWESEGEGSFTVETITKASRGTEITLHLRDEEKEFADDWRLRSIITKYSDHISVPVEMWQEGTPERDGPDGEKIPATEGYWKVMNKATALWMRNKSEISDEEYQEFYKHISHDYTDALLWSHNRVEGKQEYTNLLYIPSKAPWDLWNRDRKHGLKLFVQRVFIMDDAEQFMPSYLRFVQGLIDSNDLPLNVSREILQDNHITKAMRTGITKRVLGMLEKLAKDDAEKYQQFWAEFGQVLKEGPAEDFANRERIAGLLRFASTHTGSAAPTVSLDDYISRMKEGQTKIYYIVADSYDAAANSPHLELLRKKGIEVLLMSERIDEWLINHLTEYKEKQLHSVTRGELELGELEDAAEKEAQEKLAEESAPLIERIKAALGTKVADVKVTSRLTDTPACVVTGEGEMSTQMIKLMQAAGQPVPEVKPTFEVNPAHPLVSRLNDLQDETAFADWSNLLLQQAQLSEKGSLADPSAFIKLMNQMLLANMK.

Positions 1–345 (MSQQETHGFQ…SNDLPLNVSR (345 aa)) are a; substrate-binding. Residues 346–562 (EILQDNHITK…EGEMSTQMIK (217 aa)) are b. A c region spans residues 563-637 (LMQAAGQPVP…MNQMLLANMK (75 aa)).

Belongs to the heat shock protein 90 family. Homodimer.

It is found in the cytoplasm. Functionally, molecular chaperone. Has ATPase activity. The polypeptide is Chaperone protein HtpG (Shewanella putrefaciens (strain CN-32 / ATCC BAA-453)).